Here is a 179-residue protein sequence, read N- to C-terminus: Large ribosomal subunit protein uL5 (179 aa).

It belongs to the universal ribosomal protein uL5 family. Part of the 50S ribosomal subunit; part of the 5S rRNA/L5/L18/L25 subcomplex. Contacts the 5S rRNA and the P site tRNA. Forms a bridge to the 30S subunit in the 70S ribosome.

Its function is as follows. This is one of the proteins that bind and probably mediate the attachment of the 5S RNA into the large ribosomal subunit, where it forms part of the central protuberance. In the 70S ribosome it contacts protein S13 of the 30S subunit (bridge B1b), connecting the 2 subunits; this bridge is implicated in subunit movement. Contacts the P site tRNA; the 5S rRNA and some of its associated proteins might help stabilize positioning of ribosome-bound tRNAs. The chain is Large ribosomal subunit protein uL5 from Hamiltonella defensa subsp. Acyrthosiphon pisum (strain 5AT).